Consider the following 584-residue polypeptide: Alpha-glucosidase MAL12 (584 aa).

D214 (nucleophile) is an active-site residue. E276 acts as the Proton donor in catalysis.

It belongs to the glycosyl hydrolase 13 family.

The enzyme catalyses Hydrolysis of terminal, non-reducing (1-&gt;4)-linked alpha-D-glucose residues with release of alpha-D-glucose.. In Saccharomyces cerevisiae (strain ATCC 204508 / S288c) (Baker's yeast), this protein is Alpha-glucosidase MAL12 (MAL12).